The primary structure comprises 266 residues: UPF0354 protein LMHCC_0955 (266 aa).

It belongs to the UPF0354 family.

The sequence is that of UPF0354 protein LMHCC_0955 from Listeria monocytogenes serotype 4a (strain HCC23).